The chain runs to 492 residues: Trehalose-6-phosphate synthase (492 aa).

Arginine 25 provides a ligand contact to D-glucose 6-phosphate. 45-46 (GG) provides a ligand contact to UDP-alpha-D-glucose. 2 residues coordinate D-glucose 6-phosphate: tyrosine 101 and aspartate 155. Positions 297 and 302 each coordinate UDP-alpha-D-glucose. Arginine 335 serves as a coordination point for D-glucose 6-phosphate. Residue 400 to 404 (LVAKE) coordinates UDP-alpha-D-glucose.

This sequence belongs to the glycosyltransferase 20 family. Homotetramer.

The catalysed reaction is ADP-alpha-D-glucose + D-glucose 6-phosphate = alpha,alpha-trehalose 6-phosphate + ADP + H(+). The enzyme catalyses CDP-alpha-D-glucose + D-glucose 6-phosphate = alpha,alpha-trehalose 6-phosphate + CDP + H(+). It carries out the reaction GDP-alpha-D-glucose + D-glucose 6-phosphate = alpha,alpha-trehalose 6-phosphate + GDP + H(+). It catalyses the reaction TDP-alpha-D-glucose + D-glucose 6-phosphate = 5-methyl-UDP + alpha,alpha-trehalose 6-phosphate + H(+). The catalysed reaction is D-glucose 6-phosphate + UDP-alpha-D-glucose = alpha,alpha-trehalose 6-phosphate + UDP + H(+). Its pathway is glycan biosynthesis; trehalose biosynthesis. Probably involved in the osmoprotection via the biosynthesis of trehalose and in the production of glycogen and alpha-glucan via the TreS-Pep2 branch involved in the biosynthesis of maltose-1-phosphate (M1P). Catalyzes the transfer of glucose from UDP-glucose (UDP-Glc) to D-glucose 6-phosphate (Glc-6-P) to form trehalose-6-phosphate. Probably also able to use ADP-Glc, CDP-Glc, GDP-Glc and TDP-Glc as glucosyl donors. The chain is Trehalose-6-phosphate synthase from Mycobacterium avium (strain 104).